The following is a 334-amino-acid chain: GTPase Obg (334 aa).

An Obg domain is found at 1–159; sequence MKFIDQAIIH…RDIQLELMLL (159 aa). The disordered stretch occupies residues 67–86; that stretch reads AQNGQNGSSRKSSGKKGDDI. Over residues 68–77 the composition is skewed to low complexity; sequence QNGQNGSSRK. Positions 160–333 constitute an OBG-type G domain; that stretch reads ADVGTLGMPN…LCSDITKYLK (174 aa). GTP contacts are provided by residues 166 to 173, 191 to 195, 213 to 216, 283 to 286, and 314 to 316; these read GMPNVGKS, FTTLH, DIPG, NKID, and SSM. The Mg(2+) site is built by Ser173 and Thr193.

This sequence belongs to the TRAFAC class OBG-HflX-like GTPase superfamily. OBG GTPase family. As to quaternary structure, monomer. Requires Mg(2+) as cofactor.

It localises to the cytoplasm. Its function is as follows. An essential GTPase which binds GTP, GDP and possibly (p)ppGpp with moderate affinity, with high nucleotide exchange rates and a fairly low GTP hydrolysis rate. Plays a role in control of the cell cycle, stress response, ribosome biogenesis and in those bacteria that undergo differentiation, in morphogenesis control. The polypeptide is GTPase Obg (Buchnera aphidicola subsp. Acyrthosiphon pisum (strain 5A)).